A 339-amino-acid chain; its full sequence is MTLDIQADVSLKPFNSFGVEVKAKWFAQAHSDDEVREALAYCATHQLPLLVIGGGSNLLLTADIQALVLRMATRGIRLLSDDGQRVVVEAEAGETWHPFVQWTLEQGLSGLENLSLIPGTVGAAPMQNIGAYGVEIKDVFAGLTALDRQTGELREFDLAQCQFAYRDSLFKHQAGRWLILRVRFALNRVDHLHLEYGPVRQRLSEQGIEQPTASDVSRAICSIRSEKLPDPAVLGNAGSFFKNPVVPAALAAQIKQSHPGLVGYPQADGQVKLAAGWLIEQAGWKGFREADAGVHRLQSLVLVNYGGASGLQLLELARRIQRDIAERFSVELEMEPNLY.

Positions 18–189 constitute an FAD-binding PCMH-type domain; the sequence is GVEVKAKWFA…LRVRFALNRV (172 aa). R166 is an active-site residue. S239 (proton donor) is an active-site residue. Residue E335 is part of the active site.

It belongs to the MurB family. It depends on FAD as a cofactor.

The protein resides in the cytoplasm. It carries out the reaction UDP-N-acetyl-alpha-D-muramate + NADP(+) = UDP-N-acetyl-3-O-(1-carboxyvinyl)-alpha-D-glucosamine + NADPH + H(+). It participates in cell wall biogenesis; peptidoglycan biosynthesis. Its function is as follows. Cell wall formation. The protein is UDP-N-acetylenolpyruvoylglucosamine reductase of Pseudomonas fluorescens (strain ATCC BAA-477 / NRRL B-23932 / Pf-5).